The primary structure comprises 253 residues: Endonuclease NucS (253 aa).

Residues 63-91 form a disordered region; sequence IDDPDTDFTDGSSVGNSEEQGTDGSAHTA. Over residues 71-87 the composition is skewed to polar residues; it reads TDGSSVGNSEEQGTDGS.

Belongs to the NucS endonuclease family.

It is found in the cytoplasm. In terms of biological role, cleaves both 3' and 5' ssDNA extremities of branched DNA structures. The chain is Endonuclease NucS from Corynebacterium kroppenstedtii (strain DSM 44385 / JCM 11950 / CIP 105744 / CCUG 35717).